A 347-amino-acid chain; its full sequence is Ketol-acid reductoisomerase (NADP(+)) (347 aa).

In terms of domain architecture, KARI N-terminal Rossmann spans 3 to 182 (TKMFYDKDID…GSGRAGILET (180 aa)). Residues 26–29 (YGAQ), Arg49, Ser53, and 83–86 (DELQ) contribute to the NADP(+) site. The active site involves His108. Gly134 contacts NADP(+). Residues 183 to 328 (TFEEETTEDL…KKVRAMMPWI (146 aa)) form the KARI C-terminal knotted domain. Positions 191, 195, 227, and 231 each coordinate Mg(2+). Residue Ser252 coordinates substrate.

Belongs to the ketol-acid reductoisomerase family. It depends on Mg(2+) as a cofactor.

The enzyme catalyses (2R)-2,3-dihydroxy-3-methylbutanoate + NADP(+) = (2S)-2-acetolactate + NADPH + H(+). It carries out the reaction (2R,3R)-2,3-dihydroxy-3-methylpentanoate + NADP(+) = (S)-2-ethyl-2-hydroxy-3-oxobutanoate + NADPH + H(+). Its pathway is amino-acid biosynthesis; L-isoleucine biosynthesis; L-isoleucine from 2-oxobutanoate: step 2/4. It participates in amino-acid biosynthesis; L-valine biosynthesis; L-valine from pyruvate: step 2/4. Involved in the biosynthesis of branched-chain amino acids (BCAA). Catalyzes an alkyl-migration followed by a ketol-acid reduction of (S)-2-acetolactate (S2AL) to yield (R)-2,3-dihydroxy-isovalerate. In the isomerase reaction, S2AL is rearranged via a Mg-dependent methyl migration to produce 3-hydroxy-3-methyl-2-ketobutyrate (HMKB). In the reductase reaction, this 2-ketoacid undergoes a metal-dependent reduction by NADPH to yield (R)-2,3-dihydroxy-isovalerate. The protein is Ketol-acid reductoisomerase (NADP(+)) of Leuconostoc mesenteroides subsp. mesenteroides (strain ATCC 8293 / DSM 20343 / BCRC 11652 / CCM 1803 / JCM 6124 / NCDO 523 / NBRC 100496 / NCIMB 8023 / NCTC 12954 / NRRL B-1118 / 37Y).